The following is a 197-amino-acid chain: Holliday junction branch migration complex subunit RuvA (197 aa).

Positions 1–64 (MIGRLSGKLI…EDAHLLYGFA (64 aa)) are domain I. Residues 65–143 (SKEERQTFRQ…TGGNLTVPGG (79 aa)) form a domain II region. Residues 143–147 (GLPFA) form a flexible linker region. The interval 148 to 197 (ATPDEKSDIVNALLALGYNEKEAAAATKSLPADVTVSEGVRLALKSLMKV) is domain III.

Belongs to the RuvA family. As to quaternary structure, homotetramer. Forms an RuvA(8)-RuvB(12)-Holliday junction (HJ) complex. HJ DNA is sandwiched between 2 RuvA tetramers; dsDNA enters through RuvA and exits via RuvB. An RuvB hexamer assembles on each DNA strand where it exits the tetramer. Each RuvB hexamer is contacted by two RuvA subunits (via domain III) on 2 adjacent RuvB subunits; this complex drives branch migration. In the full resolvosome a probable DNA-RuvA(4)-RuvB(12)-RuvC(2) complex forms which resolves the HJ.

It localises to the cytoplasm. Its function is as follows. The RuvA-RuvB-RuvC complex processes Holliday junction (HJ) DNA during genetic recombination and DNA repair, while the RuvA-RuvB complex plays an important role in the rescue of blocked DNA replication forks via replication fork reversal (RFR). RuvA specifically binds to HJ cruciform DNA, conferring on it an open structure. The RuvB hexamer acts as an ATP-dependent pump, pulling dsDNA into and through the RuvAB complex. HJ branch migration allows RuvC to scan DNA until it finds its consensus sequence, where it cleaves and resolves the cruciform DNA. The sequence is that of Holliday junction branch migration complex subunit RuvA from Chromobacterium violaceum (strain ATCC 12472 / DSM 30191 / JCM 1249 / CCUG 213 / NBRC 12614 / NCIMB 9131 / NCTC 9757 / MK).